Here is a 295-residue protein sequence, read N- to C-terminus: Ribosomal protein L11 methyltransferase (295 aa).

S-adenosyl-L-methionine is bound by residues Thr-145, Gly-166, Asp-188, and Asn-230.

Belongs to the methyltransferase superfamily. PrmA family.

It is found in the cytoplasm. It carries out the reaction L-lysyl-[protein] + 3 S-adenosyl-L-methionine = N(6),N(6),N(6)-trimethyl-L-lysyl-[protein] + 3 S-adenosyl-L-homocysteine + 3 H(+). In terms of biological role, methylates ribosomal protein L11. The sequence is that of Ribosomal protein L11 methyltransferase from Pectobacterium carotovorum subsp. carotovorum (strain PC1).